The primary structure comprises 181 residues: MSRIGKKPIAIPNNVKVSLDGNVLTIEGPKGKLSMPVHEIVNVKIDNNQITVSKNQESPFAQAMHGTTAALIKNTIEGVSKGYSVTLEVVGLGYKAAMKGQELELNLGYSHPIYYKPPAGIKLEVKENKITVSGIDKQLVGQVAAEIIKFRKPDPYKGKGIRYEGQVLKLKPGKSAGKGKK.

It belongs to the universal ribosomal protein uL6 family. As to quaternary structure, part of the 50S ribosomal subunit.

Functionally, this protein binds to the 23S rRNA, and is important in its secondary structure. It is located near the subunit interface in the base of the L7/L12 stalk, and near the tRNA binding site of the peptidyltransferase center. This is Large ribosomal subunit protein uL6 from Hydrogenobaculum sp. (strain Y04AAS1).